Reading from the N-terminus, the 322-residue chain is Pyrroline-5-carboxylate reductase (322 aa).

A run of 2 helical transmembrane segments spans residues 9 to 29 and 117 to 137; these read YPNVAILGCGKLGQALLVGLL and ILISLMGGVSPGLIVEALHFW. The segment at 302–322 is disordered; sequence LSQSAGSHGEDNTTDSKTSRA. A glycan (N-linked (GlcNAc...) asparagine) is linked at Asn-313.

Belongs to the pyrroline-5-carboxylate reductase family.

Its subcellular location is the membrane. The catalysed reaction is L-proline + NADP(+) = (S)-1-pyrroline-5-carboxylate + NADPH + 2 H(+). It carries out the reaction L-proline + NAD(+) = (S)-1-pyrroline-5-carboxylate + NADH + 2 H(+). It participates in alkaloid biosynthesis. Its function is as follows. Pyrroline-5-carboxylate reductase; part of the gene cluster that mediates the biosynthesis of paraherquamide, a fungal indole alkaloid that belongs to a family of natural products containing a characteristic bicyclo[2.2.2]diazaoctane core. The first steps in the biosynthesis of paraherquamide is the production of the beta-methyl-proline precursor from L-isoleucine. They require oxidation of a terminally hydroxylated L-isoleucine to the corresponding aldehyde by enzymes which have still to be identified. Spontaneous cyclization and dehydration would yield the 4-methyl pyrolline-5-carboxylic acid, which is then reduced by the pyrroline-5-carboxylate reductase phqD leading to the beta-methyl-proline precursor. The next step of paraherquamide biosynthesis involves coupling of beta-methyl-proline and L-tryptophan by the bimodular NRPS phqB, to produce a monooxopiperazine intermediate. The reductase (R) domain of phqB utilizes NADPH for hydride transfer to reduce the thioester bond of the T domain-tethered linear dipeptide to a hemithioaminal intermediate, which spontaneously cleaves the C-S bond to release the aldehyde product. This compound undergoes spontaneous cyclization and dehydration to give a dienamine which is reverse prenylated at C-2 by the reverse prenyltransferase phqJ. The other prenyltransferase present in the cluster, phqI may be a redundant gene in the pathway. During biosynthetic assembly, the key step to produce the polycyclic core is catalyzed by the bifunctional reductase and intramolecular [4+2] Diels-Alderase, phqE, resulting in formation of the [2.2.2] diazaoctane intermediate preparaherquamide. Following formation of preparaherquamide, an indole 2,3-epoxidation-initiated pinacol-like rearrangement is catalyzed by the phqK FAD-dependent monooxygenase. The prenyltransferase phqA, the cytochrome P450 monooxygenase phqL, and the FAD-linked oxidoreductase phqH (or the cytochrome P450 monooxygenase phqM), are proposed to be involved in the formation of the pyran ring. The FAD-dependent monooxygenase phqK is likely responsible for generation of the spiro-oxindole, and the N-methylation is likely mediated by the phqN methyltransferase leading to the isolable natural product paraherquamide F. However, the order of these biosynthetic steps has still to be determined. In late-stage paraherquamide biosynthesis, the third P450 monooxygenase, phqO, is probably responsible for the C-14 hydroxylation, transforming paraherquamide F to paraherquamide G, and paraherquamide E to the final product paraherquamide A. The expansion from the 6-membered ring pyran (in paraherquamides F and G) to the 7-membered dioxepin ring (in paraherquamides A and E) represents a poorly understood but intriguing process that probably involves the 2-oxoglutarate-dependent dioxygenase phqC. Finally, the remaining members of the paraherquamide cluster, including phqI as well as phqM (or phqH), do not have a clearly prescribed role and appear to be redundant. The protein is Pyrroline-5-carboxylate reductase of Penicillium fellutanum.